A 560-amino-acid polypeptide reads, in one-letter code: NAD-dependent malic enzyme (560 aa).

Tyr-100 (proton donor) is an active-site residue. Arg-153 contributes to the NAD(+) binding site. The active-site Proton acceptor is Lys-171. A divalent metal cation contacts are provided by Glu-242, Asp-243, and Asp-266. Residues Asp-266 and Asn-413 each coordinate NAD(+).

It belongs to the malic enzymes family. Homotetramer. Requires Mg(2+) as cofactor. Mn(2+) is required as a cofactor.

It carries out the reaction (S)-malate + NAD(+) = pyruvate + CO2 + NADH. It catalyses the reaction oxaloacetate + H(+) = pyruvate + CO2. The protein is NAD-dependent malic enzyme of Psychromonas ingrahamii (strain DSM 17664 / CCUG 51855 / 37).